Here is a 247-residue protein sequence, read N- to C-terminus: Coproheme decarboxylase (247 aa).

Fe-coproporphyrin III is bound by residues Arg129, 143–147, His170, Gln183, and Ser221; that span reads YPMDK. Tyr143 is an active-site residue.

It belongs to the ChdC family. Type 1 subfamily. Fe-coproporphyrin III is required as a cofactor.

It carries out the reaction Fe-coproporphyrin III + 2 H2O2 + 2 H(+) = heme b + 2 CO2 + 4 H2O. The enzyme catalyses Fe-coproporphyrin III + H2O2 + H(+) = harderoheme III + CO2 + 2 H2O. It catalyses the reaction harderoheme III + H2O2 + H(+) = heme b + CO2 + 2 H2O. The protein operates within porphyrin-containing compound metabolism; protoheme biosynthesis. Functionally, involved in coproporphyrin-dependent heme b biosynthesis. Catalyzes the decarboxylation of Fe-coproporphyrin III (coproheme) to heme b (protoheme IX), the last step of the pathway. The reaction occurs in a stepwise manner with a three-propionate intermediate. This Bacillus cereus (strain AH820) protein is Coproheme decarboxylase.